The primary structure comprises 274 residues: Diaminopimelate epimerase (274 aa).

Substrate-binding residues include N11, Q44, and N64. The active-site Proton donor is the C73. Residues 74 to 75 (GN), N157, N190, and 208 to 209 (ER) each bind substrate. Residue C217 is the Proton acceptor of the active site. 218–219 (GS) contacts substrate.

Belongs to the diaminopimelate epimerase family. In terms of assembly, homodimer.

It is found in the cytoplasm. It carries out the reaction (2S,6S)-2,6-diaminopimelate = meso-2,6-diaminopimelate. It participates in amino-acid biosynthesis; L-lysine biosynthesis via DAP pathway; DL-2,6-diaminopimelate from LL-2,6-diaminopimelate: step 1/1. In terms of biological role, catalyzes the stereoinversion of LL-2,6-diaminopimelate (L,L-DAP) to meso-diaminopimelate (meso-DAP), a precursor of L-lysine and an essential component of the bacterial peptidoglycan. The protein is Diaminopimelate epimerase of Sodalis glossinidius (strain morsitans).